A 50-amino-acid polypeptide reads, in one-letter code: Mast cell degranulating peptide (50 aa).

The N-terminal stretch at 1-27 (MISMLRCTFFFLSVILITSYFVTPTMS) is a signal peptide. K29 carries the post-translational modification N6-formyllysine; partial. Intrachain disulfides connect C30/C42 and C32/C46. N6-formyllysine; partial is present on residues K44 and K48. Asparagine amide is present on N49.

As to expression, expressed by the venom gland.

The protein resides in the secreted. Functionally, potent anti-inflammatory agent. At low concentrations, mediates the degranulation of mast cells thus evoking an inflammatory response. Also acts as a neurotoxin capable of blocking a class of voltage-gated potassium channels. This Apis mellifera (Honeybee) protein is Mast cell degranulating peptide.